The sequence spans 109 residues: Juvenile hormone esterase, isoform A (109 aa).

This sequence belongs to the type-B carboxylesterase/lipase family. In terms of tissue distribution, fat body, the site of their biosynthesis, and the hemolymph where it is secreted.

The catalysed reaction is juvenile hormone I + H2O = juvenile hormone I carboxylate + methanol + H(+). It carries out the reaction juvenile hormone III + H2O = juvenile hormone III carboxylate + methanol + H(+). In terms of biological role, JH esterase plays a crucial role in the decrease of JH activity in lepidopteran insects, by hydrolyzing the methyl ester of JH. It is also involved in the transport of JH. The chain is Juvenile hormone esterase, isoform A from Trichoplusia ni (Cabbage looper).